Consider the following 195-residue polypeptide: MNVKKAELVTSAVKPEQYPDGGRPEVALAGRSNVGKSSFINKMINRKNLARTSSKPGKTQTLNFYLINDSFYFVDVPGYGFARVSKQERQKWGNMMETYFTTREALKAAVLLVDLRHPPTKDDVMMYEFLKHYEIPVIVIATKADKVPRGKHQKHAKIARETLRMADGDPLILFSAETGQGKDEAWAALLPFVAS.

An EngB-type G domain is found at 22 to 195; it reads GRPEVALAGR…WAALLPFVAS (174 aa). GTP-binding positions include 30–37, 57–61, 75–78, 142–145, and 174–176; these read GRSNVGKS, GKTQT, DVPG, TKAD, and FSA. Residues serine 37 and threonine 59 each coordinate Mg(2+).

It belongs to the TRAFAC class TrmE-Era-EngA-EngB-Septin-like GTPase superfamily. EngB GTPase family. Mg(2+) is required as a cofactor.

Functionally, necessary for normal cell division and for the maintenance of normal septation. The protein is Probable GTP-binding protein EngB of Geobacillus kaustophilus (strain HTA426).